Reading from the N-terminus, the 102-residue chain is MDLKKLSGSELLIELEKLNCDLAIPWKIEDEKLSKTFKFKNFMQAFAFMTQSALYAEKKNHHPEWFNIYNKVVIQLTTHDVAGISFKDFDLAKKMESFIPHF.

This sequence belongs to the pterin-4-alpha-carbinolamine dehydratase family.

The catalysed reaction is (4aS,6R)-4a-hydroxy-L-erythro-5,6,7,8-tetrahydrobiopterin = (6R)-L-erythro-6,7-dihydrobiopterin + H2O. In Psychromonas ingrahamii (strain DSM 17664 / CCUG 51855 / 37), this protein is Putative pterin-4-alpha-carbinolamine dehydratase.